The following is a 184-amino-acid chain: ESX-1 secretion-associated protein EspD (184 aa).

The tract at residues 33–56 is disordered; it reads IGVGSAATPDTGPDLDNAHGQAET.

It is found in the secreted. In terms of biological role, required for ESX-1 function. Required for the maintenance of adequate cellular levels of both EspA and EspC. Facilitates EsxA secretion. This chain is ESX-1 secretion-associated protein EspD, found in Mycobacterium tuberculosis (strain CDC 1551 / Oshkosh).